A 306-amino-acid chain; its full sequence is Protoheme IX farnesyltransferase (306 aa).

The next 9 helical transmembrane spans lie at 28-48 (LGLV…AIML), 53-73 (FLSS…IMAG), 105-125 (ASIL…LFTI), 127-147 (IETG…YSVW), 156-176 (TIIG…AIEP), 182-202 (AWML…ALAI), 227-244 (LSML…FFMQ), 246-266 (LGTV…LLAI), and 283-303 (FVYS…VTLI).

This sequence belongs to the UbiA prenyltransferase family. Protoheme IX farnesyltransferase subfamily. Interacts with CtaA.

It localises to the cell membrane. It carries out the reaction heme b + (2E,6E)-farnesyl diphosphate + H2O = Fe(II)-heme o + diphosphate. Its pathway is porphyrin-containing compound metabolism; heme O biosynthesis; heme O from protoheme: step 1/1. Its function is as follows. Converts heme B (protoheme IX) to heme O by substitution of the vinyl group on carbon 2 of heme B porphyrin ring with a hydroxyethyl farnesyl side group. In Macrococcus caseolyticus (strain JCSC5402) (Macrococcoides caseolyticum), this protein is Protoheme IX farnesyltransferase.